The following is a 296-amino-acid chain: MTTPVLNTDFPGLKLAARGKVRDIYDLGETLLIVTTDRISAFDVIMNEGIPHKGYVLTQISAYWFRQMEGIIKNHIISTDVADFPKECQPYADVLAGRSMWVKKAQPLAAECIVRGYISGSGWKDYQSTGAICGIKLPEGLKESDRLPQPIFTPSTKAELGTHDENISFEEMCRICGTEISTKVRDVTLAIYEKARDIADQKGIIIADTKFEYGIYEGELIIIDECMTPDSSRFWPKDSYKPGGPQPSFDKQFLRDYLETLDWGKTAPAPPLPEEIVRKTGEKYMEALVKLTGKGI.

Belongs to the SAICAR synthetase family.

It catalyses the reaction 5-amino-1-(5-phospho-D-ribosyl)imidazole-4-carboxylate + L-aspartate + ATP = (2S)-2-[5-amino-1-(5-phospho-beta-D-ribosyl)imidazole-4-carboxamido]succinate + ADP + phosphate + 2 H(+). It functions in the pathway purine metabolism; IMP biosynthesis via de novo pathway; 5-amino-1-(5-phospho-D-ribosyl)imidazole-4-carboxamide from 5-amino-1-(5-phospho-D-ribosyl)imidazole-4-carboxylate: step 1/2. In Geobacter sp. (strain M21), this protein is Phosphoribosylaminoimidazole-succinocarboxamide synthase.